Reading from the N-terminus, the 362-residue chain is Peptide chain release factor 1 (362 aa).

Gln-237 is subject to N5-methylglutamine.

Belongs to the prokaryotic/mitochondrial release factor family. Methylated by PrmC. Methylation increases the termination efficiency of RF1.

Its subcellular location is the cytoplasm. In terms of biological role, peptide chain release factor 1 directs the termination of translation in response to the peptide chain termination codons UAG and UAA. This Vibrio vulnificus (strain CMCP6) protein is Peptide chain release factor 1.